A 107-amino-acid polypeptide reads, in one-letter code: MLKSNLKIENRLSLIGVTESVKRSKSPNGIEHCRIWLEHRSEQQEAGLIRQARCKMPIQISGHQLIHKTQGITVGSKILVVGFITSHKQTNGLNQLVLHAEHIELLD.

The SSB domain maps to 8–107 (IENRLSLIGV…LHAEHIELLD (100 aa)).

Belongs to the PriB family. In terms of assembly, homodimer. Interacts with PriA and DnaT. Component of the replication restart primosome. Primosome assembly occurs via a 'hand-off' mechanism. PriA binds to replication forks, subsequently PriB then DnaT bind; DnaT then displaces ssDNA to generate the helicase loading substrate.

Involved in the restart of stalled replication forks, which reloads the replicative helicase on sites other than the origin of replication; the PriA-PriB pathway is the major replication restart pathway. During primosome assembly it facilitates complex formation between PriA and DnaT on DNA; stabilizes PriA on DNA. Stimulates the DNA unwinding activity of PriA helicase. The chain is Replication restart protein PriB from Actinobacillus succinogenes (strain ATCC 55618 / DSM 22257 / CCUG 43843 / 130Z).